The following is a 300-amino-acid chain: Acetaldehyde dehydrogenase 3 (300 aa).

11–14 (SGNI) contacts NAD(+). The active-site Acyl-thioester intermediate is the Cys126. NAD(+) contacts are provided by residues 157 to 165 (SAGPGTRAN) and Asn276.

The protein belongs to the acetaldehyde dehydrogenase family.

It catalyses the reaction acetaldehyde + NAD(+) + CoA = acetyl-CoA + NADH + H(+). This chain is Acetaldehyde dehydrogenase 3 (hsaG), found in Rhodococcus jostii (strain RHA1).